Here is a 452-residue protein sequence, read N- to C-terminus: MQVKETVADGLKREFQVNVPAADIDAKIDEKLADLKDKVRLNGFRPGKVPTAHLKRVYGRSVAAETIDKLVRDTNDGIFSERGFRLATEPKITMPQDQKEIEDILEGKSDLTYTVAIEVVPAIELADFKSFSVEKPVVDVADSDVDEAIKRIADANRAYADKAEGAKAETGDRVTVSFKGTIDGVAFDGGTGEDIPVVIGSASFIPGFEDQLVGIAVGETRTIKVTFPANYASETLAGKPAEFETTATKLEAPQETTIDDEFAKTLGLESLDKLKEAAKARLAAEYAGASRLKVKRQLLDRLDEAHKFDAPPSLIEQEFEVMWRSINAEMQSTGKTFADENTTEDAAKEEYRKIADRRVRLGLVLSEIGEKNKIQVTDDEVSRAVIERARQMPGREKEVWDFYRSNPEALAQLRAPIYEDKVVDFILELANVTEKKVTREELYKDEDDKTAA.

A PPIase FKBP-type domain is found at 171–256 (GDRVTVSFKG…ATKLEAPQET (86 aa)).

This sequence belongs to the FKBP-type PPIase family. Tig subfamily.

The protein localises to the cytoplasm. The enzyme catalyses [protein]-peptidylproline (omega=180) = [protein]-peptidylproline (omega=0). Its function is as follows. Involved in protein export. Acts as a chaperone by maintaining the newly synthesized protein in an open conformation. Functions as a peptidyl-prolyl cis-trans isomerase. This chain is Trigger factor, found in Rhodopseudomonas palustris (strain ATCC BAA-98 / CGA009).